Consider the following 377-residue polypeptide: Proteinase-activated receptor 3 (377 aa).

An N-terminal signal peptide occupies residues 1 to 19 (MRAAIFAAIGALLLSPASC). Residues 20–38 (QSGMEYDADNLAKPTLSIK) constitute a propeptide, removed for receptor activation. Residues 39–94 (TFRGAPQNSFEEFPLSAIEGWTGTTKTVKIKCPEELDSNLHVNNATMGYLSSPLST) lie on the Extracellular side of the membrane. Residue Asn82 is glycosylated (N-linked (GlcNAc...) asparagine). Residues 95-120 (KLIPAIYILVFAVGMPANAVTLWMLF) traverse the membrane as a helical segment. Topologically, residues 121 to 127 (RTRTIRM) are cytoplasmic. The chain crosses the membrane as a helical span at residues 128–147 (TIFYTNLAIADFLFCVTLPF). At 148 to 166 (RIAYHLNGNNWVFGEVMCR) the chain is on the extracellular side. A disulfide bridge links Cys165 with Cys244. The helical transmembrane segment at 167-188 (ATTVIFYGNMYCSILLLACISI) threads the bilayer. At 189-205 (NRYLAIVHPFTYRGLPK) the chain is on the cytoplasmic side. Residues 206–229 (RTYALLTCGLVWTTVFLYMLPFFI) form a helical membrane-spanning segment. Residues 230–259 (LKQEYYLVQQDITTCHDVHNTCESSSPFQL) are Extracellular-facing. Residues 260-279 (YYFISLAFFGFLIPFLVIIY) traverse the membrane as a helical segment. The Cytoplasmic segment spans residues 280-296 (CYTAIIWTLNAKDRRWL). Residues 297 to 321 (WYIKASLLTFVIFTICFAPSNIILI) form a helical membrane-spanning segment. At 322–335 (IHHANYYYSNTDAL) the chain is on the extracellular side. The chain crosses the membrane as a helical span at residues 336 to 360 (YFVYLIALCLGSLNSCLDPFLYFLM). Residues 361–377 (SKITDHSTAYLTMVKLS) lie on the Cytoplasmic side of the membrane.

Belongs to the G-protein coupled receptor 1 family. As to quaternary structure, interacts with INSC/inscuteable and GPSM2. A proteolytic cleavage generates a new N-terminus that functions as a tethered ligand.

The protein localises to the cell membrane. Functionally, receptor for activated thrombin coupled to G proteins that stimulate phosphoinositide hydrolysis. The polypeptide is Proteinase-activated receptor 3 (F2RL2) (Bos taurus (Bovine)).